The primary structure comprises 169 residues: Cell division inhibitor SulA (169 aa).

Positions 106-112 (ALRTGNY) are ftsZ binding. The lon protease binding stretch occupies residues 162-169 (KIHSNLYH).

This sequence belongs to the SulA family. Interacts with FtsZ. Post-translationally, is rapidly cleaved and degraded by the Lon protease once DNA damage is repaired.

Its function is as follows. Component of the SOS system and an inhibitor of cell division. Accumulation of SulA causes rapid cessation of cell division and the appearance of long, non-septate filaments. In the presence of GTP, binds a polymerization-competent form of FtsZ in a 1:1 ratio, thus inhibiting FtsZ polymerization and therefore preventing it from participating in the assembly of the Z ring. This mechanism prevents the premature segregation of damaged DNA to daughter cells during cell division. In Escherichia fergusonii (strain ATCC 35469 / DSM 13698 / CCUG 18766 / IAM 14443 / JCM 21226 / LMG 7866 / NBRC 102419 / NCTC 12128 / CDC 0568-73), this protein is Cell division inhibitor SulA.